The primary structure comprises 300 residues: Cation-efflux pump FieF (300 aa).

The helical transmembrane segment at 24-44 threads the bilayer; the sequence is LLIKIFAWWYTGSVSILAALV. The Zn(2+) site is built by Asp45 and Asp49. Transmembrane regions (helical) follow at residues 82–102 and 114–134; these read AALAQSMFISGSALFLFLTGI and AGVGVVVTLIALVSTLALVTF. Zn(2+)-binding residues include His153 and Asp157. The next 2 membrane-spanning stretches (helical) occupy residues 156–176 and 178–198; these read SDVMMNGAILVALGLSWYGWH and ADALFALGIGIYILYSALRMG.

This sequence belongs to the cation diffusion facilitator (CDF) transporter (TC 2.A.4) family. FieF subfamily. Homodimer.

Its subcellular location is the cell inner membrane. It carries out the reaction Zn(2+)(in) + H(+)(out) = Zn(2+)(out) + H(+)(in). The enzyme catalyses Cd(2+)(in) + H(+)(out) = Cd(2+)(out) + H(+)(in). It catalyses the reaction Fe(2+)(in) + H(+)(out) = Fe(2+)(out) + H(+)(in). Functionally, divalent metal cation transporter which exports Zn(2+), Cd(2+) and possibly Fe(2+). May be involved in zinc and iron detoxification by efflux. This Klebsiella pneumoniae subsp. pneumoniae (strain ATCC 700721 / MGH 78578) protein is Cation-efflux pump FieF.